The chain runs to 449 residues: Plasmepsin IV (449 aa).

Residues 1 to 37 (MALTVKEEEFSNTLIKNASAFDRLKLGNLKNLKIQKK) lie on the Cytoplasmic side of the membrane. A propeptide spanning residues 1–121 (MALTVKEEEF…SGYAQKGYLG (121 aa)) is cleaved from the precursor. A helical; Signal-anchor for type II membrane protein membrane pass occupies residues 38–58 (LQFLYLILFVLITGVFFFFLI). Topologically, residues 59-449 (GNFYSHRKLY…SVGFAVAKNL (391 aa)) are lumenal. Residues 137 to 444 (FYGEGQIGTN…DYEKESVGFA (308 aa)) form the Peptidase A1 domain. Asp-155 is a catalytic residue. A disulfide bridge connects residues Cys-168 and Cys-173. The active site involves Asp-335. Cysteines 370 and 406 form a disulfide.

Belongs to the peptidase A1 family. As to quaternary structure, component of the hemozoin formation complex (HFC) composed of falcipains FP2A and/or FP2B, plasmepsins PMII, PMIII/HAP and PMIV, heme detoxifying protein HDP and falcilysin FLN. The HFC complex is involved in hemoglobin degradation and detoxification of heme in the food vacuole during the asexual blood stage. Proteolytically cleaved into the soluble active mature form by cysteine proteases in the digestive vacuole of trophozoites. Proteolysis requires an acidic environment. Autoprocessing or transprocessing by other plasmepsins such as PMII may serve as an alternate activation system.

The protein localises to the membrane. It localises to the vacuole lumen. The enzyme catalyses Hydrolysis of the bonds linking certain hydrophobic residues in hemoglobin or globin. Also cleaves small molecules substrates such as Ala-Leu-Glu-Arg-Thr-Phe-|-Phe(NO2)-Ser-Phe-Pro-Thr.. With respect to regulation, inhibited by KNI derived compounds KNI-10333 and to a lesser extent KNI-10743. Functionally, during the asexual blood stage, catalyzes the cleavage of denatured host hemoglobin (Hb). Digestion of host Hb is an essential step which provides the parasite with amino acids for protein synthesis, and regulates osmolarity. The polypeptide is Plasmepsin IV (Plasmodium falciparum (isolate 3D7)).